A 464-amino-acid polypeptide reads, in one-letter code: Phosphoglucosamine mutase (464 aa).

The Phosphoserine intermediate role is filled by Ser112. Residues Ser112, Asp252, Asp254, and Asp256 each coordinate Mg(2+). Ser112 bears the Phosphoserine mark.

It belongs to the phosphohexose mutase family. Requires Mg(2+) as cofactor. Post-translationally, activated by phosphorylation.

The enzyme catalyses alpha-D-glucosamine 1-phosphate = D-glucosamine 6-phosphate. In terms of biological role, catalyzes the conversion of glucosamine-6-phosphate to glucosamine-1-phosphate. The chain is Phosphoglucosamine mutase from Synechococcus sp. (strain CC9902).